A 395-amino-acid chain; its full sequence is Succinyl-diaminopimelate desuccinylase (395 aa).

Position 81 (H81) interacts with Zn(2+). D83 is an active-site residue. Residue D114 participates in Zn(2+) binding. E146 (proton acceptor) is an active-site residue. Zn(2+)-binding residues include E147, E175, and H364.

This sequence belongs to the peptidase M20A family. DapE subfamily. As to quaternary structure, homodimer. Requires Zn(2+) as cofactor. Co(2+) serves as cofactor.

The enzyme catalyses N-succinyl-(2S,6S)-2,6-diaminopimelate + H2O = (2S,6S)-2,6-diaminopimelate + succinate. It functions in the pathway amino-acid biosynthesis; L-lysine biosynthesis via DAP pathway; LL-2,6-diaminopimelate from (S)-tetrahydrodipicolinate (succinylase route): step 3/3. Functionally, catalyzes the hydrolysis of N-succinyl-L,L-diaminopimelic acid (SDAP), forming succinate and LL-2,6-diaminopimelate (DAP), an intermediate involved in the bacterial biosynthesis of lysine and meso-diaminopimelic acid, an essential component of bacterial cell walls. The chain is Succinyl-diaminopimelate desuccinylase from Parvibaculum lavamentivorans (strain DS-1 / DSM 13023 / NCIMB 13966).